We begin with the raw amino-acid sequence, 405 residues long: Terminal uridylyltransferase cid1 (405 aa).

UTP is bound at residue serine 90. Aspartate 101 and aspartate 103 together coordinate Mg(2+). Residues alanine 168, asparagine 171, threonine 172, lysine 193, lysine 197, serine 211, tyrosine 212, and histidine 336 each contribute to the UTP site. Residues 267 to 336 (SLGSLLHGFF…AIEDPFEISH (70 aa)) enclose the PAP-associated domain. ATP is bound at residue arginine 340. Positions 377–405 (APIPPRRQKKTDEQSNKKLLNETDGDNSE) are disordered. Residues 386–397 (KTDEQSNKKLLN) show a composition bias toward basic and acidic residues.

The protein belongs to the DNA polymerase type-B-like family. Mg(2+) is required as a cofactor. Mn(2+) serves as cofactor.

Its subcellular location is the cytoplasm. It carries out the reaction RNA(n) + UTP = RNA(n)-3'-uridine ribonucleotide + diphosphate. The catalysed reaction is RNA(n) + ATP = RNA(n)-3'-adenine ribonucleotide + diphosphate. Its function is as follows. Cytoplasmic uridylyltransferase that mediates the terminal uridylation of mRNAs with short poly(A) tails such as such as act1, hcn1 and urg1 mRNAs, hence facilitating global mRNA decay. Uridylates the 3' ends of actin mRNAs upon S-phase arrest. Also has a weak poly(A) polymerase (PAP) activity. Residue His-336 is responsible for the specificity for UTP. Involved in cell cycle arrest where in association with crb2/rhp9 and chk1 it inhibits unscheduled mitosis. This Schizosaccharomyces pombe (strain 972 / ATCC 24843) (Fission yeast) protein is Terminal uridylyltransferase cid1.